A 186-amino-acid polypeptide reads, in one-letter code: Elongation factor P (186 aa).

This sequence belongs to the elongation factor P family.

It localises to the cytoplasm. Its pathway is protein biosynthesis; polypeptide chain elongation. Its function is as follows. Involved in peptide bond synthesis. Stimulates efficient translation and peptide-bond synthesis on native or reconstituted 70S ribosomes in vitro. Probably functions indirectly by altering the affinity of the ribosome for aminoacyl-tRNA, thus increasing their reactivity as acceptors for peptidyl transferase. The sequence is that of Elongation factor P from Polynucleobacter asymbioticus (strain DSM 18221 / CIP 109841 / QLW-P1DMWA-1) (Polynucleobacter necessarius subsp. asymbioticus).